The primary structure comprises 360 residues: SPRY domain-containing SOCS box protein 3 (360 aa).

The interval 20-55 is disordered; it reads RDQDARSPTLPAEEEAWGYDSDGQHSNSDSDTDLLH. Residues 85–274 form the B30.2/SPRY domain; the sequence is LHTFHQIKSC…MKVIRSCCCR (190 aa). The 52-residue stretch at 264-315 folds into the SOCS box domain; sequence SMKVIRSCCCRTSLQYLCCARLRQLLPDSVDSLEVLPLPPGLKQVLGNKLGW. The interval 323 to 350 is disordered; it reads RSNQHKGDTSATTSCGSDSDSSCTPGQD. Low complexity predominate over residues 331-346; that stretch reads TSATTSCGSDSDSSCT.

The protein belongs to the SPSB family. As to quaternary structure, substrate-recognition component of the ECS(SPSB3) complex, composed of spsb3, cul5, elob, elob and rnf7/rbx2.

Its subcellular location is the nucleus. It functions in the pathway protein modification; protein ubiquitination. Its function is as follows. Substrate-recognition component of a cullin-5-RING E3 ubiquitin-protein ligase complex (ECS complex, also named CRL5 complex), which mediates the ubiquitination and subsequent proteasomal degradation of target proteins. This Xenopus tropicalis (Western clawed frog) protein is SPRY domain-containing SOCS box protein 3 (spsb3).